An 889-amino-acid polypeptide reads, in one-letter code: Mitochondrial intermediate peptidase (889 aa).

The transit peptide at 1–30 (MASTSKNAQRAAASVAHSYHVCLARRMSRL) directs the protein to the mitochondrion. The segment at 60-112 (SSSLAAQRVQRPTSAGPILTNPISDHEKDNDELRSLFDAPPTSSSANHLRSSG) is disordered. A compositionally biased stretch (basic and acidic residues) spans 83-94 (SDHEKDNDELRS). A compositionally biased stretch (polar residues) spans 100-112 (PTSSSANHLRSSG). Residue histidine 670 coordinates Zn(2+). The active site involves glutamate 671. Zn(2+)-binding residues include histidine 674 and histidine 677.

It belongs to the peptidase M3 family. Zn(2+) serves as cofactor.

It localises to the mitochondrion matrix. It catalyses the reaction Release of an N-terminal octapeptide as second stage of processing of some proteins imported into the mitochondrion.. Cleaves proteins, imported into the mitochondrion, to their mature size. While most mitochondrial precursor proteins are processed to the mature form in one step by mitochondrial processing peptidase (MPP), the sequential cleavage by MIP of an octapeptide after initial processing by MPP is a required step for a subgroup of nuclear-encoded precursor proteins destined for the matrix or the inner membrane. The chain is Mitochondrial intermediate peptidase (OCT1) from Mycosarcoma maydis (Corn smut fungus).